The primary structure comprises 434 residues: MDYLDLGPYSSASGTVRLPGSKSISNRVLLLAALAEGETTITNLLDSDDTRVMLDALGKLGVKLARDGDTCVVTGTRGAFTAKTADLFLGNAGTAVRPLTAALAVNGGDYRVHGVPRMHERPIGDLVDGLRQIGAQIDYELNEGYPPLRIKPATISVDAPIRVRGDVSSQFLTALLMTLPLVKAKDGRTVVEVDGELISKPYIDITIRLMARFGVTVERDGWQRFVVPAGVRYRSPGRIMVEGDASSASYFLAAGALGGGPLRVEGVGRASIQGDVGFANALMQMGANVTMGDDWIDVRGIGHDHGKLEPIDMDFNLIPDAAMTIAVAALFANGTSTLRNIASWRVKETDRIAAMATELRKVGAIVEEGPDYLVVTPPAKLTPNAAIDTYDDHRMAMCFSLVSLGGVPVRINDPKCVGKTFPDYFDRFAALAKA.

3-phosphoshikimate contacts are provided by K22, S23, and R27. K22 is a binding site for phosphoenolpyruvate. G93 and R121 together coordinate phosphoenolpyruvate. 3-phosphoshikimate contacts are provided by S168, S169, Q170, S199, D320, and K347. Phosphoenolpyruvate is bound at residue Q170. The Proton acceptor role is filled by D320. Phosphoenolpyruvate is bound by residues R351, R394, and K419.

This sequence belongs to the EPSP synthase family. In terms of assembly, monomer.

It localises to the cytoplasm. The catalysed reaction is 3-phosphoshikimate + phosphoenolpyruvate = 5-O-(1-carboxyvinyl)-3-phosphoshikimate + phosphate. It participates in metabolic intermediate biosynthesis; chorismate biosynthesis; chorismate from D-erythrose 4-phosphate and phosphoenolpyruvate: step 6/7. Functionally, catalyzes the transfer of the enolpyruvyl moiety of phosphoenolpyruvate (PEP) to the 5-hydroxyl of shikimate-3-phosphate (S3P) to produce enolpyruvyl shikimate-3-phosphate and inorganic phosphate. This Burkholderia cenocepacia (strain ATCC BAA-245 / DSM 16553 / LMG 16656 / NCTC 13227 / J2315 / CF5610) (Burkholderia cepacia (strain J2315)) protein is 3-phosphoshikimate 1-carboxyvinyltransferase.